A 399-amino-acid polypeptide reads, in one-letter code: Acetate kinase (399 aa).

Asn-7 provides a ligand contact to Mg(2+). Lys-14 lines the ATP pocket. Position 90 (Arg-90) interacts with substrate. The active-site Proton donor/acceptor is Asp-147. ATP-binding positions include 207–211, 282–284, and 330–334; these read HLGNG, DFR, and GIGEN. Glu-385 is a binding site for Mg(2+).

Belongs to the acetokinase family. In terms of assembly, homodimer. Mg(2+) is required as a cofactor. The cofactor is Mn(2+).

The protein localises to the cytoplasm. It carries out the reaction acetate + ATP = acetyl phosphate + ADP. The protein operates within metabolic intermediate biosynthesis; acetyl-CoA biosynthesis; acetyl-CoA from acetate: step 1/2. In terms of biological role, catalyzes the formation of acetyl phosphate from acetate and ATP. Can also catalyze the reverse reaction. This chain is Acetate kinase, found in Caldicellulosiruptor saccharolyticus (strain ATCC 43494 / DSM 8903 / Tp8T 6331).